The sequence spans 1126 residues: Carbamoyl phosphate synthase large chain (1126 aa).

The carboxyphosphate synthetic domain stretch occupies residues methionine 1 to aspartate 402. 12 residues coordinate ATP: arginine 129, arginine 169, glycine 175, glycine 176, glutamate 208, isoleucine 210, glutamate 215, glycine 241, valine 242, histidine 243, glutamine 285, and glutamate 299. The 196-residue stretch at lysine 133 to leucine 328 folds into the ATP-grasp 1 domain. Mg(2+) is bound by residues glutamine 285, glutamate 299, and asparagine 301. 3 residues coordinate Mn(2+): glutamine 285, glutamate 299, and asparagine 301. The segment at lysine 403–threonine 551 is oligomerization domain. Residues glutamate 552–tyrosine 962 are carbamoyl phosphate synthetic domain. The ATP-grasp 2 domain occupies glycine 681–valine 881. The ATP site is built by arginine 717, lysine 765, leucine 767, glutamate 772, glycine 797, valine 798, histidine 799, serine 800, glutamine 840, and glutamate 852. Glutamine 840, glutamate 852, and asparagine 854 together coordinate Mg(2+). 3 residues coordinate Mn(2+): glutamine 840, glutamate 852, and asparagine 854. Positions glutamate 963–aspartate 1126 are allosteric domain. In terms of domain architecture, MGS-like spans glycine 964–aspartate 1126.

The protein belongs to the CarB family. In terms of assembly, composed of two chains; the small (or glutamine) chain promotes the hydrolysis of glutamine to ammonia, which is used by the large (or ammonia) chain to synthesize carbamoyl phosphate. Tetramer of heterodimers (alpha,beta)4. Requires Mg(2+) as cofactor. Mn(2+) is required as a cofactor.

The catalysed reaction is hydrogencarbonate + L-glutamine + 2 ATP + H2O = carbamoyl phosphate + L-glutamate + 2 ADP + phosphate + 2 H(+). It carries out the reaction hydrogencarbonate + NH4(+) + 2 ATP = carbamoyl phosphate + 2 ADP + phosphate + 2 H(+). It participates in amino-acid biosynthesis; L-arginine biosynthesis; carbamoyl phosphate from bicarbonate: step 1/1. Its pathway is pyrimidine metabolism; UMP biosynthesis via de novo pathway; (S)-dihydroorotate from bicarbonate: step 1/3. In terms of biological role, large subunit of the glutamine-dependent carbamoyl phosphate synthetase (CPSase). CPSase catalyzes the formation of carbamoyl phosphate from the ammonia moiety of glutamine, carbonate, and phosphate donated by ATP, constituting the first step of 2 biosynthetic pathways, one leading to arginine and/or urea and the other to pyrimidine nucleotides. The large subunit (synthetase) binds the substrates ammonia (free or transferred from glutamine from the small subunit), hydrogencarbonate and ATP and carries out an ATP-coupled ligase reaction, activating hydrogencarbonate by forming carboxy phosphate which reacts with ammonia to form carbamoyl phosphate. The sequence is that of Carbamoyl phosphate synthase large chain from Bifidobacterium adolescentis (strain ATCC 15703 / DSM 20083 / NCTC 11814 / E194a).